The following is a 270-amino-acid chain: Putative phosphatase YxeH (270 aa).

D8 (nucleophile) is an active-site residue. D8 is a binding site for Mg(2+). Residue M9 coordinates phosphate. D10 lines the Mg(2+) pocket. Phosphate is bound by residues 42 to 43 (TG) and K196. A Mg(2+)-binding site is contributed by D219. Residue N222 participates in phosphate binding.

It belongs to the HAD-like hydrolase superfamily. Cof family. Mg(2+) is required as a cofactor.

This Bacillus subtilis (strain 168) protein is Putative phosphatase YxeH (yxeH).